The chain runs to 831 residues: Multiphosphoryl transfer protein (831 aa).

The region spanning 1 to 90 (MLTIQFLCPL…EYILVRFIDS (90 aa)) is the HPr domain. His-15 serves as the catalytic Pros-phosphohistidine intermediate; for HPr activity. The residue at position 15 (His-15) is a Phosphohistidine; by EI. The tract at residues 119–650 (GNVLASGVGV…AVKSQLRQLD (532 aa)) is PTS EI. Catalysis depends on His-298, which acts as the Tele-phosphohistidine intermediate; for PTS EI activity. A Phosphohistidine; by autocatalysis modification is found at His-298. Phosphoenolpyruvate-binding residues include Arg-405 and Arg-441. Residues Glu-540 and Asp-564 each contribute to the Mg(2+) site. Phosphoenolpyruvate is bound by residues 563 to 564 (ND) and Arg-574. Cys-611 (proton donor; for EI activity) is an active-site residue. The region spanning 685 to 828 (PLLALENIFV…QSILTLLETE (144 aa)) is the PTS EIIA type-2 domain. His-747 functions as the Tele-phosphohistidine intermediate; for PTS EIIA activity in the catalytic mechanism. A Phosphohistidine; by HPr modification is found at His-747.

It belongs to the PEP-utilizing enzyme family. The cofactor is Mg(2+).

It is found in the cytoplasm. The enzyme catalyses L-histidyl-[protein] + phosphoenolpyruvate = N(pros)-phospho-L-histidyl-[protein] + pyruvate. The catalysed reaction is D-fructose(out) + N(pros)-phospho-L-histidyl-[protein] = D-fructose 1-phosphate(in) + L-histidyl-[protein]. Its function is as follows. Multifunctional protein that includes general (non sugar-specific) and sugar-specific components of the phosphoenolpyruvate-dependent sugar phosphotransferase system (sugar PTS). This major carbohydrate active transport system catalyzes the phosphorylation of incoming sugar substrates concomitantly with their translocation across the cell membrane. The enzyme II FryABC PTS system is involved in fructose transport. This chain is Multiphosphoryl transfer protein (fryA), found in Shigella flexneri.